A 397-amino-acid chain; its full sequence is Cytochrome b (397 aa).

The next 4 membrane-spanning stretches (helical) occupy residues 38-58 (FGSL…FLAM), 82-104 (WLLR…LHIF), 119-139 (VWCL…IGYV), and 185-205 (FFSL…LHLA). Residues His-88 and His-102 each contribute to the heme b site. Residues His-189 and His-203 each coordinate heme b. Position 208 (His-208) interacts with a ubiquinone. 4 helical membrane-spanning segments follow: residues 231 to 251 (FYVK…IWIF), 295 to 315 (AGGV…PFFK), 327 to 347 (IYQG…WIGC), and 354 to 373 (FVTI…AITP).

This sequence belongs to the cytochrome b family. The main subunits of complex b-c1 are: cytochrome b, cytochrome c1 and the Rieske protein. Requires heme b as cofactor.

It is found in the mitochondrion inner membrane. Component of the ubiquinol-cytochrome c reductase complex (complex III or cytochrome b-c1 complex) that is part of the mitochondrial respiratory chain. The b-c1 complex mediates electron transfer from ubiquinol to cytochrome c. Contributes to the generation of a proton gradient across the mitochondrial membrane that is then used for ATP synthesis. This chain is Cytochrome b (MT-CYB), found in Oryza sativa subsp. indica (Rice).